A 225-amino-acid polypeptide reads, in one-letter code: UPF0758 protein SEQ_1136 (225 aa).

In terms of domain architecture, MPN spans Pro-102 to Leu-224. Residues His-173, His-175, and Asp-186 each contribute to the Zn(2+) site. The JAMM motif signature appears at His-173–Asp-186.

It belongs to the UPF0758 family.

The chain is UPF0758 protein SEQ_1136 from Streptococcus equi subsp. equi (strain 4047).